Consider the following 110-residue polypeptide: MEVAAKLSGARISAQKARLVADQIRGKKVGDALNLLAFSSKKAAEIMKKVLESAVANAEHNEGADVDDLKVSTVFVNEGRSLKRIMPRAKGRADRIVKRSCHITVKVADK.

It belongs to the universal ribosomal protein uL22 family. Part of the 50S ribosomal subunit.

Functionally, this protein binds specifically to 23S rRNA; its binding is stimulated by other ribosomal proteins, e.g. L4, L17, and L20. It is important during the early stages of 50S assembly. It makes multiple contacts with different domains of the 23S rRNA in the assembled 50S subunit and ribosome. In terms of biological role, the globular domain of the protein is located near the polypeptide exit tunnel on the outside of the subunit, while an extended beta-hairpin is found that lines the wall of the exit tunnel in the center of the 70S ribosome. This Stutzerimonas stutzeri (strain A1501) (Pseudomonas stutzeri) protein is Large ribosomal subunit protein uL22.